Reading from the N-terminus, the 81-residue chain is Putative membrane protein insertion efficiency factor (81 aa).

A disordered region spans residues 61–81 (NPGGYDPVPPIPTSRSSSMAE).

The protein belongs to the UPF0161 family.

It localises to the cell inner membrane. Functionally, could be involved in insertion of integral membrane proteins into the membrane. This Pseudomonas fluorescens (strain Pf0-1) protein is Putative membrane protein insertion efficiency factor.